An 896-amino-acid chain; its full sequence is Protein argonaute 9 (896 aa).

The 114-residue stretch at 267–380 (PVVDFLLANQ…FPIEFCNLVS (114 aa)) folds into the PAZ domain. The Piwi domain maps to 550-857 (FLLCILAERK…AAAQMGTVMK (308 aa)).

It belongs to the argonaute family. Ago subfamily. Expressed in embryonic shoot apex region, pollen and developing ovules.

Its function is as follows. Involved in RNA-mediated post-transcriptional gene silencing (PTGS). Main component of the RNA-induced silencing complex (RISC) that binds to a short guide RNA such as a microRNA (miRNA) or small interfering RNA (siRNA). RISC uses the mature miRNA or siRNA as a guide for slicer-directed cleavage of homologous mRNAs to repress gene expression. Associates preferentially with small RNAs of 24 nucleotide in length with a 5' terminal adenosine. Interacts with 24 nucleotide sRNAs derived from transposable elements (TEs). Required to silence pericentrometric-located TEs in female gametes and their accessory cells. Necessary to inactivate a significant proportion of long terminal repeat retrotransposons (LTRs) in the ovule. Required to specify cell fate in ovule. Involved in the control of female gamete formation by restricting the specification of gametophyte precursors in a dosage-dependent, non-cell-autonomous manner. Targeted by turnip yellows virus (TuYV) protein P0 (via F-box-like domain) for probable proteasome degradation and thereby inactivating AGO9 function in RNA silencing. The polypeptide is Protein argonaute 9 (AGO9) (Arabidopsis thaliana (Mouse-ear cress)).